The chain runs to 320 residues: TPR repeat-containing protein MJ0263 (320 aa).

9 TPR repeats span residues 12-45 (ILKD…DKDN), 46-79 (PLVL…EGTS), 80-113 (LLSL…SKPC), 114-147 (YLSP…YPNL), 148-181 (TSIL…KKDD), 182-215 (AHAW…NENL), 216-249 (VHVY…FPND), 250-283 (VEAK…KNVK), and 289-320 (KSSI…DNNI).

The sequence is that of TPR repeat-containing protein MJ0263 from Methanocaldococcus jannaschii (strain ATCC 43067 / DSM 2661 / JAL-1 / JCM 10045 / NBRC 100440) (Methanococcus jannaschii).